A 406-amino-acid polypeptide reads, in one-letter code: Arginine biosynthesis bifunctional protein ArgJ (406 aa).

The substrate site is built by Thr-152, Lys-179, Thr-190, Glu-277, Asn-401, and Ser-406. Thr-190 (nucleophile) is an active-site residue.

The protein belongs to the ArgJ family. Heterotetramer of two alpha and two beta chains.

It is found in the cytoplasm. It catalyses the reaction N(2)-acetyl-L-ornithine + L-glutamate = N-acetyl-L-glutamate + L-ornithine. The catalysed reaction is L-glutamate + acetyl-CoA = N-acetyl-L-glutamate + CoA + H(+). It functions in the pathway amino-acid biosynthesis; L-arginine biosynthesis; L-ornithine and N-acetyl-L-glutamate from L-glutamate and N(2)-acetyl-L-ornithine (cyclic): step 1/1. It participates in amino-acid biosynthesis; L-arginine biosynthesis; N(2)-acetyl-L-ornithine from L-glutamate: step 1/4. Its function is as follows. Catalyzes two activities which are involved in the cyclic version of arginine biosynthesis: the synthesis of N-acetylglutamate from glutamate and acetyl-CoA as the acetyl donor, and of ornithine by transacetylation between N(2)-acetylornithine and glutamate. The sequence is that of Arginine biosynthesis bifunctional protein ArgJ from Neisseria meningitidis serogroup A / serotype 4A (strain DSM 15465 / Z2491).